A 496-amino-acid polypeptide reads, in one-letter code: Probable cytosol aminopeptidase (496 aa).

Mn(2+) is bound by residues Lys-251 and Asp-256. Lys-263 is a catalytic residue. Positions 274, 333, and 335 each coordinate Mn(2+). The active site involves Arg-337.

It belongs to the peptidase M17 family. It depends on Mn(2+) as a cofactor.

It localises to the cytoplasm. It catalyses the reaction Release of an N-terminal amino acid, Xaa-|-Yaa-, in which Xaa is preferably Leu, but may be other amino acids including Pro although not Arg or Lys, and Yaa may be Pro. Amino acid amides and methyl esters are also readily hydrolyzed, but rates on arylamides are exceedingly low.. The catalysed reaction is Release of an N-terminal amino acid, preferentially leucine, but not glutamic or aspartic acids.. Functionally, presumably involved in the processing and regular turnover of intracellular proteins. Catalyzes the removal of unsubstituted N-terminal amino acids from various peptides. The polypeptide is Probable cytosol aminopeptidase (Acidovorax ebreus (strain TPSY) (Diaphorobacter sp. (strain TPSY))).